Consider the following 111-residue polypeptide: Mitochondrial import inner membrane translocase subunit TIM14 (111 aa).

Topologically, residues 1–3 (MTG) are mitochondrial intermembrane. The helical transmembrane segment at 4-24 (GLIAAGLGLAAVGFGARYVLR) threads the bilayer. Over 25 to 111 (NQALIKKGME…AKDLMESTKS (87 aa)) the chain is Mitochondrial matrix. Positions 58–111 (EAAKILGITPSAKPAKIKDAHKKVMIVNHPDRGGSPYLAAKINEAKDLMESTKS) constitute a J domain.

This sequence belongs to the TIM14 family. In terms of assembly, probable component of the PAM complex at least composed of a mitochondrial HSP70 protein, GrpE, tim-44, tim-16 and tim-14.

The protein localises to the mitochondrion inner membrane. Functionally, probable component of the PAM complex, a complex required for the translocation of transit peptide-containing proteins from the inner membrane into the mitochondrial matrix in an ATP-dependent manner. May act as a co-chaperone that stimulate the ATP-dependent activity. This chain is Mitochondrial import inner membrane translocase subunit TIM14 (dnj-21), found in Caenorhabditis briggsae.